Reading from the N-terminus, the 188-residue chain is Peptidyl-tRNA hydrolase (188 aa).

Tyr-14 serves as a coordination point for tRNA. His-19 serves as the catalytic Proton acceptor. Residues Tyr-64, Asn-66, and Asn-112 each coordinate tRNA.

It belongs to the PTH family. In terms of assembly, monomer.

Its subcellular location is the cytoplasm. It catalyses the reaction an N-acyl-L-alpha-aminoacyl-tRNA + H2O = an N-acyl-L-amino acid + a tRNA + H(+). Hydrolyzes ribosome-free peptidyl-tRNAs (with 1 or more amino acids incorporated), which drop off the ribosome during protein synthesis, or as a result of ribosome stalling. Its function is as follows. Catalyzes the release of premature peptidyl moieties from peptidyl-tRNA molecules trapped in stalled 50S ribosomal subunits, and thus maintains levels of free tRNAs and 50S ribosomes. This Bacillus velezensis (strain DSM 23117 / BGSC 10A6 / LMG 26770 / FZB42) (Bacillus amyloliquefaciens subsp. plantarum) protein is Peptidyl-tRNA hydrolase.